Consider the following 184-residue polypeptide: Glutathione-regulated potassium-efflux system ancillary protein KefG (184 aa).

The protein belongs to the NAD(P)H dehydrogenase (quinone) family. KefG subfamily. Interacts with KefB.

It localises to the cell inner membrane. It carries out the reaction a quinone + NADH + H(+) = a quinol + NAD(+). It catalyses the reaction a quinone + NADPH + H(+) = a quinol + NADP(+). In terms of biological role, regulatory subunit of a potassium efflux system that confers protection against electrophiles. Required for full activity of KefB. The polypeptide is Glutathione-regulated potassium-efflux system ancillary protein KefG (Shigella dysenteriae serotype 1 (strain Sd197)).